The chain runs to 1108 residues: Ubiquitin carboxyl-terminal hydrolase 5 (1108 aa).

The MATH domain maps to 55–187; that stretch reads FQRFTWHIKS…DGALLLTAYV (133 aa). Residues Cys-120 and Cys-222 each act as nucleophile in the active site. The USP domain occupies 213–528; sequence VGLKNQGATC…SAYMLLYLRK (316 aa). His-464 serves as the catalytic Proton acceptor.

This sequence belongs to the peptidase C19 family.

The protein localises to the nucleus. The enzyme catalyses Thiol-dependent hydrolysis of ester, thioester, amide, peptide and isopeptide bonds formed by the C-terminal Gly of ubiquitin (a 76-residue protein attached to proteins as an intracellular targeting signal).. Its function is as follows. Hydrolase that deubiquitinates target proteins. Cleaves the UBL propeptide in sde2. This chain is Ubiquitin carboxyl-terminal hydrolase 5 (ubp5), found in Schizosaccharomyces pombe (strain 972 / ATCC 24843) (Fission yeast).